The following is a 287-amino-acid chain: Protease HtpX (287 aa).

A run of 2 helical transmembrane segments spans residues 4 to 24 (VFLLIATNLAILLVASIVMSI) and 33 to 53 (GGLLVFAAIFGFGGSFISLAI). Histidine 139 is a binding site for Zn(2+). Residue glutamate 140 is part of the active site. Histidine 143 provides a ligand contact to Zn(2+). Transmembrane regions (helical) follow at residues 154–174 (LIQGVVNTFVIFAARVVAGII) and 195–215 (GVVFVLDMLFGILASIIVAYF). Glutamate 220 contacts Zn(2+).

Belongs to the peptidase M48B family. Requires Zn(2+) as cofactor.

The protein localises to the cell inner membrane. The sequence is that of Protease HtpX from Shewanella denitrificans (strain OS217 / ATCC BAA-1090 / DSM 15013).